We begin with the raw amino-acid sequence, 456 residues long: 3-isopropylmalate dehydratase large subunit (456 aa).

Residues Cys336, Cys396, and Cys399 each contribute to the [4Fe-4S] cluster site.

Belongs to the aconitase/IPM isomerase family. LeuC type 1 subfamily. In terms of assembly, heterodimer of LeuC and LeuD. [4Fe-4S] cluster is required as a cofactor.

The catalysed reaction is (2R,3S)-3-isopropylmalate = (2S)-2-isopropylmalate. It functions in the pathway amino-acid biosynthesis; L-leucine biosynthesis; L-leucine from 3-methyl-2-oxobutanoate: step 2/4. Functionally, catalyzes the isomerization between 2-isopropylmalate and 3-isopropylmalate, via the formation of 2-isopropylmaleate. The chain is 3-isopropylmalate dehydratase large subunit from Staphylococcus haemolyticus (strain JCSC1435).